The following is a 506-amino-acid chain: FAD-linked oxidoreductase chry5 (506 aa).

The first 17 residues, 1–17, serve as a signal peptide directing secretion; that stretch reads MHLQALTGLATLAVTAA. Residues 59–241 enclose the FAD-binding PCMH-type domain; that stretch reads LDKPTVNIVA…TSVTSKTYDA (183 aa). Asn-205, Asn-272, Asn-281, Asn-389, and Asn-431 each carry an N-linked (GlcNAc...) asparagine glycan.

It belongs to the oxygen-dependent FAD-linked oxidoreductase family. It depends on FAD as a cofactor.

The protein operates within pigment biosynthesis. In terms of biological role, FAD-linked oxidoreductase; part of the gene cluster that mediates the biosynthesis of the yellow pigment chrysogine. Pyruvic acid and anthranilic acid are likely substrates for the nonribosomal peptide synthetase chry1/NRPS14, with pyruvic acid adenylated by the first A domain and anthranilic acid by the second. If pyruvic acid and anthranilic acid are merged and released from chry1/NRPS14 by hydrolysis, a subsequent amidation would lead to 2-pyruvoylaminobenzamide. This process is probably catalyzed by the amidotransferase chry2 using glutamine as amino donor. The dehydrogenase chry5 that has a terminal berberine bridge domain for C-N cyclization could catalyze the cyclization of 2-pyruvoylaminobenzamide to yield acetyl-4(3H)-quinazolidinone. A final reduction of acetyl-4(3H)-quinazolidinone catalyzed by the oxidoreductase chry4 would result in chrysogine. This chain is FAD-linked oxidoreductase chry5, found in Gibberella zeae (strain ATCC MYA-4620 / CBS 123657 / FGSC 9075 / NRRL 31084 / PH-1) (Wheat head blight fungus).